The following is a 169-amino-acid chain: Small ribosomal subunit protein bS16 (169 aa).

Residues 114–169 are disordered; sequence AEGPTAEAITEKRRKAKEEAEAKAAAEAEAAEKAEAEAAEKAAAEAAEESEEASAE. Residues 129-156 show a composition bias toward basic and acidic residues; it reads AKEEAEAKAAAEAEAAEKAEAEAAEKAA. The segment covering 159-169 has biased composition (acidic residues); it reads AAEESEEASAE.

This sequence belongs to the bacterial ribosomal protein bS16 family.

In Corynebacterium urealyticum (strain ATCC 43042 / DSM 7109), this protein is Small ribosomal subunit protein bS16.